The following is a 185-amino-acid chain: Ribosome-recycling factor (185 aa).

Belongs to the RRF family.

It localises to the cytoplasm. Responsible for the release of ribosomes from messenger RNA at the termination of protein biosynthesis. May increase the efficiency of translation by recycling ribosomes from one round of translation to another. In Vibrio vulnificus (strain YJ016), this protein is Ribosome-recycling factor.